Here is a 535-residue protein sequence, read N- to C-terminus: Potassium channel subfamily K member 10 (535 aa).

The Cytoplasmic portion of the chain corresponds to 1-68; sequence MYFSYIGYFF…GLQTVMKWKT (68 aa). A helical membrane pass occupies residues 69-89; the sequence is VVAIFVVVVVYLVTGGLVFRA. The pore-forming intramembrane region spans 151–177; sequence LGSAFFFAGTVITTIGYGNIAPSTEGG. 4 residues coordinate K(+): Thr-164, Ile-165, Gly-166, and Tyr-167. The selectivity filter 1 stretch occupies residues 164–169; the sequence is TIGYGN. A helical membrane pass occupies residues 179 to 199; it reads IFCILYAIFGIPLFGFLLAGI. At 200 to 230 the chain is on the cytoplasmic side; it reads GDQLGTIFGKSIARVEKVFRKKQVSQTKIRV. The helical transmembrane segment at 231-251 threads the bilayer; that stretch reads ISTILFILAGCIVFVTIPAVI. The segment at residues 260-291 is an intramembrane region (pore-forming); the sequence is ALESIYFVVVTLTTVGFGDFVAGGNAGINYRE. K(+) contacts are provided by Thr-273, Val-274, Gly-275, and Phe-276. Residues 273 to 278 are selectivity filter 2; that stretch reads TVGFGD. A helical membrane pass occupies residues 296 to 316; sequence LVWFWILVGLAYFAAVLSMIG. The Cytoplasmic segment spans residues 317–535; it reads DWLRVLSKKT…ENNSLLEDRN (219 aa). 2 disordered regions span residues 410–438 and 510–535; these read QESI…ASED and EMEN…EDRN. Over residues 525 to 535 the composition is skewed to polar residues; the sequence is LENNSLLEDRN.

As to quaternary structure, homodimer; disulfide-linked. Forms heterodimers with other 2-pore domain K(+) channel subunits, such as KCNK2, KCNK4 and KCNK18. As to expression, detected in dorsal root ganglia (DRG) neurons (at protein level).

The protein localises to the cell membrane. The enzyme catalyses K(+)(in) = K(+)(out). The catalysed reaction is Rb(+)(in) = Rb(+)(out). It carries out the reaction Cs(+)(in) = Cs(+)(out). With respect to regulation, activated by stimuli such as mechanical stretch, acidic pH and polyunsaturated free fatty acids. Activated by a dihydroacridine analog, ML67-33. Inhibited by polycationic dye ruthenium red. Selectively activated by T2A3 (2-[(4-chloro-3-methylphenyl)amino] benzoic acid). In terms of biological role, k(+) channel that conducts voltage-dependent outward rectifying currents upon membrane depolarization. Voltage sensing is coupled to K(+) electrochemical gradient in an 'ion flux gating' mode where outward but not inward ion flow opens the gate. Converts to voltage-independent 'leak' conductance mode upon stimulation by various stimuli including mechanical membrane stretch, acidic pH, heat and lipids. Homo- and heterodimerizes to form functional channels with distinct regulatory and gating properties. In trigeminal ganglia sensory neurons, the heterodimer of KCNK10/TREK-2 and KCNK18/TRESK inhibits neuronal firing and neurogenic inflammation by stabilizing the resting membrane potential at K(+) equilibrium potential as well as by regulating the threshold of action potentials and the spike frequency. Permeable to other monovalent ions such as Rb(+) and Cs(+). In Mus musculus (Mouse), this protein is Potassium channel subfamily K member 10.